Here is a 291-residue protein sequence, read N- to C-terminus: Ribonuclease Z (291 aa).

Residues His-61, His-63, Asp-65, His-66, His-133, Asp-201, and His-257 each contribute to the Zn(2+) site. The active-site Proton acceptor is Asp-65.

Belongs to the RNase Z family. Homodimer. It depends on Zn(2+) as a cofactor.

It carries out the reaction Endonucleolytic cleavage of RNA, removing extra 3' nucleotides from tRNA precursor, generating 3' termini of tRNAs. A 3'-hydroxy group is left at the tRNA terminus and a 5'-phosphoryl group is left at the trailer molecule.. Zinc phosphodiesterase, which displays some tRNA 3'-processing endonuclease activity. Probably involved in tRNA maturation, by removing a 3'-trailer from precursor tRNA. This chain is Ribonuclease Z, found in Saccharolobus islandicus (strain M.16.27) (Sulfolobus islandicus).